Consider the following 136-residue polypeptide: T-cell receptor beta chain V region LB2 (136 aa).

The first 21 residues, 1–21, serve as a signal peptide directing secretion; the sequence is MNKWVFCWVTLCLLTVETTHG. The interval 22 to 116 is v segment; the sequence is DGGIITQTPK…EMTVFLCASS (95 aa). Cys45 and Cys113 are disulfide-bonded. A d segment region spans residues 117 to 120; it reads IRLA. Positions 121–136 are j segment; sequence SAETLYFGSGTRLTVL.

This Mus musculus (Mouse) protein is T-cell receptor beta chain V region LB2.